Here is a 291-residue protein sequence, read N- to C-terminus: Probable L-ascorbate peroxidase 3, peroxisomal (291 aa).

His41 serves as the catalytic Proton acceptor. The tract at residues 114-133 (YVPGRRDSSDSPEEGRLPDA) is disordered. Residues 116–133 (PGRRDSSDSPEEGRLPDA) are compositionally biased toward basic and acidic residues. Residue His161 coordinates heme b. K(+) is bound by residues Thr162, Thr178, and Asp185. A helical transmembrane segment spans residues 263-283 (LLMQTAAGVAVAAAVVAWAYL).

It belongs to the peroxidase family. Ascorbate peroxidase subfamily. Requires heme b as cofactor. As to expression, expressed in stems.

The protein resides in the peroxisome membrane. It carries out the reaction L-ascorbate + H2O2 = L-dehydroascorbate + 2 H2O. Its function is as follows. Plays a key role in hydrogen peroxide removal. This Oryza sativa subsp. japonica (Rice) protein is Probable L-ascorbate peroxidase 3, peroxisomal.